A 238-amino-acid polypeptide reads, in one-letter code: Ribitol-5-phosphate cytidylyltransferase (238 aa).

Residues 7-10 and 81-87 each bind CTP; these read LAGG and GDDRNHS.

This sequence belongs to the IspD/TarI cytidylyltransferase family. TarI subfamily.

It carries out the reaction D-ribitol 5-phosphate + CTP + H(+) = CDP-L-ribitol + diphosphate. Its pathway is cell wall biogenesis; poly(ribitol phosphate) teichoic acid biosynthesis. Its function is as follows. Catalyzes the transfer of the cytidylyl group of CTP to D-ribitol 5-phosphate. This Staphylococcus epidermidis (strain ATCC 12228 / FDA PCI 1200) protein is Ribitol-5-phosphate cytidylyltransferase.